The following is a 149-amino-acid chain: Putative prefoldin subunit alpha (149 aa).

The protein belongs to the prefoldin subunit alpha family.

The protein localises to the cytoplasm. Functionally, molecular chaperone capable of stabilizing a range of proteins. This is Putative prefoldin subunit alpha from Aquifex aeolicus (strain VF5).